The sequence spans 341 residues: Glycerol-3-phosphate dehydrogenase [NAD(P)+] 1 (341 aa).

Residues S11, W12, R32, R33, and K106 each contribute to the NADPH site. K106, G137, and S139 together coordinate sn-glycerol 3-phosphate. An NADPH-binding site is contributed by A141. The sn-glycerol 3-phosphate site is built by K192, D245, S255, R256, and N257. Residue K192 is the Proton acceptor of the active site. Residue R256 participates in NADPH binding. 2 residues coordinate NADPH: V280 and E282.

Belongs to the NAD-dependent glycerol-3-phosphate dehydrogenase family.

The protein localises to the cytoplasm. It catalyses the reaction sn-glycerol 3-phosphate + NAD(+) = dihydroxyacetone phosphate + NADH + H(+). The enzyme catalyses sn-glycerol 3-phosphate + NADP(+) = dihydroxyacetone phosphate + NADPH + H(+). It functions in the pathway membrane lipid metabolism; glycerophospholipid metabolism. In terms of biological role, catalyzes the reduction of the glycolytic intermediate dihydroxyacetone phosphate (DHAP) to sn-glycerol 3-phosphate (G3P), the key precursor for phospholipid synthesis. This chain is Glycerol-3-phosphate dehydrogenase [NAD(P)+] 1, found in Salinibacter ruber (strain DSM 13855 / M31).